We begin with the raw amino-acid sequence, 352 residues long: Phosphoribosylformylglycinamidine cyclo-ligase (352 aa).

This sequence belongs to the AIR synthase family.

The protein resides in the cytoplasm. The enzyme catalyses 2-formamido-N(1)-(5-O-phospho-beta-D-ribosyl)acetamidine + ATP = 5-amino-1-(5-phospho-beta-D-ribosyl)imidazole + ADP + phosphate + H(+). It participates in purine metabolism; IMP biosynthesis via de novo pathway; 5-amino-1-(5-phospho-D-ribosyl)imidazole from N(2)-formyl-N(1)-(5-phospho-D-ribosyl)glycinamide: step 2/2. The protein is Phosphoribosylformylglycinamidine cyclo-ligase of Pseudomonas putida (strain W619).